Consider the following 1394-residue polypeptide: ABC transporter patM (1394 aa).

Positions 1–41 (MVDNYHSSLDVAKTPIQSDADAQKSEAETEGPSSKSSQIAA) are disordered. The ABC transporter 1 domain maps to 98–341 (SPLQNRQRKQ…FEDLGFECLS (244 aa)). 6 consecutive transmembrane segments (helical) span residues 437 to 457 (SLWA…GTLF), 467 to 487 (LFIF…QSMA), 511 to 531 (IAYA…AICY), 546 to 566 (GNFF…SMFF), 579 to 599 (AVLP…LYVP), and 688 to 708 (VGIN…GMEM). The segment at 727 to 755 (VTHRRDKIDSETGQDQGNESSEMSAGQSN) is disordered. The span at 737–755 (ETGQDQGNESSEMSAGQSN) shows a compositional bias: polar residues. An ABC transporter 2 domain is found at 767–1013 (DKSHNLAWTN…EAIQYFQPRS (247 aa)). 808–815 (GVSGAGKT) provides a ligand contact to ATP. A run of 6 helical transmembrane segments spans residues 1131 to 1151 (GAYN…PLGL), 1177 to 1197 (LAFV…SSLV), 1219 to 1239 (FLMY…CASL), 1245 to 1265 (AAFA…GTLS), 1280 to 1300 (ISPL…DLPI), and 1368 to 1388 (IGVF…MTYL).

Belongs to the ABC transporter superfamily. ABCG family. PDR (TC 3.A.1.205) subfamily.

The protein localises to the vacuole membrane. The protein resides in the cell membrane. It functions in the pathway mycotoxin biosynthesis; patulin biosynthesis. In terms of biological role, ABC transporter; part of the gene cluster that mediates the biosynthesis of patulin, an acetate-derived tetraketide mycotoxin produced by several fungal species that shows antimicrobial properties against several bacteria. May be involved in the secretion of E-ascladiol to be converted to patulin by the secreted patulin synthase patE. This is ABC transporter patM from Penicillium expansum (Blue mold rot fungus).